The sequence spans 288 residues: Acetyl-coenzyme A carboxylase carboxyl transferase subunit beta (288 aa).

The 265-residue stretch at Leu24–Ala288 folds into the CoA carboxyltransferase N-terminal domain.

Belongs to the AccD/PCCB family. Acetyl-CoA carboxylase is a heterohexamer composed of biotin carboxyl carrier protein (AccB), biotin carboxylase (AccC) and two subunits each of ACCase subunit alpha (AccA) and ACCase subunit beta (AccD).

Its subcellular location is the cytoplasm. The enzyme catalyses N(6)-carboxybiotinyl-L-lysyl-[protein] + acetyl-CoA = N(6)-biotinyl-L-lysyl-[protein] + malonyl-CoA. It participates in lipid metabolism; malonyl-CoA biosynthesis; malonyl-CoA from acetyl-CoA: step 1/1. Its function is as follows. Component of the acetyl coenzyme A carboxylase (ACC) complex. Biotin carboxylase (BC) catalyzes the carboxylation of biotin on its carrier protein (BCCP) and then the CO(2) group is transferred by the transcarboxylase to acetyl-CoA to form malonyl-CoA. In Methylocella silvestris (strain DSM 15510 / CIP 108128 / LMG 27833 / NCIMB 13906 / BL2), this protein is Acetyl-coenzyme A carboxylase carboxyl transferase subunit beta.